The chain runs to 209 residues: Ribonuclease HII (209 aa).

Residues Asp20–Ile209 enclose the RNase H type-2 domain. Residues Asp26, Glu27, and Asp122 each coordinate a divalent metal cation.

This sequence belongs to the RNase HII family. Requires Mn(2+) as cofactor. The cofactor is Mg(2+).

It localises to the cytoplasm. The enzyme catalyses Endonucleolytic cleavage to 5'-phosphomonoester.. In terms of biological role, endonuclease that specifically degrades the RNA of RNA-DNA hybrids. This is Ribonuclease HII from Prochlorococcus marinus subsp. pastoris (strain CCMP1986 / NIES-2087 / MED4).